A 140-amino-acid chain; its full sequence is Ribonuclease P protein component (140 aa).

Residues 33–54 (RALKPSSAKKSSLDTAAKTQPA) form a disordered region.

Belongs to the RnpA family. As to quaternary structure, consists of a catalytic RNA component (M1 or rnpB) and a protein subunit.

It carries out the reaction Endonucleolytic cleavage of RNA, removing 5'-extranucleotides from tRNA precursor.. In terms of biological role, RNaseP catalyzes the removal of the 5'-leader sequence from pre-tRNA to produce the mature 5'-terminus. It can also cleave other RNA substrates such as 4.5S RNA. The protein component plays an auxiliary but essential role in vivo by binding to the 5'-leader sequence and broadening the substrate specificity of the ribozyme. The protein is Ribonuclease P protein component of Trichormus variabilis (strain ATCC 29413 / PCC 7937) (Anabaena variabilis).